Reading from the N-terminus, the 183-residue chain is Large ribosomal subunit protein uL5 (183 aa).

This sequence belongs to the universal ribosomal protein uL5 family. As to quaternary structure, part of the 50S ribosomal subunit; part of the 5S rRNA/L5/L18/L25 subcomplex. Contacts the 5S rRNA and the P site tRNA. Forms a bridge to the 30S subunit in the 70S ribosome.

Functionally, this is one of the proteins that bind and probably mediate the attachment of the 5S RNA into the large ribosomal subunit, where it forms part of the central protuberance. In the 70S ribosome it contacts protein S13 of the 30S subunit (bridge B1b), connecting the 2 subunits; this bridge is implicated in subunit movement. Contacts the P site tRNA; the 5S rRNA and some of its associated proteins might help stabilize positioning of ribosome-bound tRNAs. In Pseudothermotoga lettingae (strain ATCC BAA-301 / DSM 14385 / NBRC 107922 / TMO) (Thermotoga lettingae), this protein is Large ribosomal subunit protein uL5.